A 362-amino-acid chain; its full sequence is Protein RAFTIN 1B (362 aa).

Positions 1–20 (MARFLVALLAATLVAVQAGG) are cleaved as a signal peptide. A disordered region spans residues 58 to 94 (STSFVRDPEDRPPFDYRDYSRSSSDDEPSKSTVAASG). Residues 63 to 86 (RDPEDRPPFDYRDYSRSSSDDEPS) are compositionally biased toward basic and acidic residues. Asn102 is a glycosylation site (N-linked (GlcNAc...) asparagine). One can recognise a BURP domain in the interval 142-356 (FFHEEAVRVG…PYGHIIWAKN (215 aa)).

In terms of tissue distribution, specifically expressed in anthers, in the tapetum and microspores (at protein level).

In terms of biological role, required for pollen development. Probably synthesized in the tapetum, packaged in Ubisch bodies and transported at appropriate stages to the micropsores. In Triticum aestivum (Wheat), this protein is Protein RAFTIN 1B (RAFTIN1B).